A 427-amino-acid chain; its full sequence is MLDTVAKADGIDALMLDIGAKAKAAARPLAIASADQKNAALMAMSEAILSGKSQIIAANAIDLKAAETAGLAASFIDRLTLNEERITAMAKGLREVAELKDPVSEVIAAWERPNGLKIERVRTPLGVIGVIYESRPNVTADAGALCLKSGNAVILRGGSDSVNSSRAIHACLVAGLVAAGLPDHAIQLVPVTDRAAVGAMLTGLNGTIDVIVPRGGKSLVARVQSDARVPVFAHLEGLCHVYVDGSADLDMAKSIVVNAKMRRTGICGSAETLLVDSAAIGSHLMPLLEALTEAGCEIRASATVLKVFPGLKAAVDEDWRTEYLDAIISVAVVDGIGGAIDHIARYSSNHTEAVIAEDPAVVERFFNEVDSAILLHNASTQFADGGEFGMGGEIGIATGKMHARGPVGVEQLTSFKYRVHGTGQIRP.

Belongs to the gamma-glutamyl phosphate reductase family.

It localises to the cytoplasm. The catalysed reaction is L-glutamate 5-semialdehyde + phosphate + NADP(+) = L-glutamyl 5-phosphate + NADPH + H(+). It participates in amino-acid biosynthesis; L-proline biosynthesis; L-glutamate 5-semialdehyde from L-glutamate: step 2/2. Catalyzes the NADPH-dependent reduction of L-glutamate 5-phosphate into L-glutamate 5-semialdehyde and phosphate. The product spontaneously undergoes cyclization to form 1-pyrroline-5-carboxylate. The polypeptide is Gamma-glutamyl phosphate reductase (Allorhizobium ampelinum (strain ATCC BAA-846 / DSM 112012 / S4) (Agrobacterium vitis (strain S4))).